Consider the following 284-residue polypeptide: Acetyl-coenzyme A carboxylase carboxyl transferase subunit beta (284 aa).

The CoA carboxyltransferase N-terminal domain occupies G24 to R284.

It belongs to the AccD/PCCB family. Acetyl-CoA carboxylase is a heterohexamer composed of biotin carboxyl carrier protein (AccB), biotin carboxylase (AccC) and two subunits each of ACCase subunit alpha (AccA) and ACCase subunit beta (AccD).

Its subcellular location is the cytoplasm. The enzyme catalyses N(6)-carboxybiotinyl-L-lysyl-[protein] + acetyl-CoA = N(6)-biotinyl-L-lysyl-[protein] + malonyl-CoA. It participates in lipid metabolism; malonyl-CoA biosynthesis; malonyl-CoA from acetyl-CoA: step 1/1. In terms of biological role, component of the acetyl coenzyme A carboxylase (ACC) complex. Biotin carboxylase (BC) catalyzes the carboxylation of biotin on its carrier protein (BCCP) and then the CO(2) group is transferred by the transcarboxylase to acetyl-CoA to form malonyl-CoA. This is Acetyl-coenzyme A carboxylase carboxyl transferase subunit beta from Flavobacterium psychrophilum (strain ATCC 49511 / DSM 21280 / CIP 103535 / JIP02/86).